Reading from the N-terminus, the 348-residue chain is MAVSSIASIFAAEKSYSIPPVCQLLVSPVLNPLYDAKAESQIDAWCAEFLKLQPGSEKAVFVQESRLGLLAAYVYPTIPYEKIVPVGKFFASFFLADDILDSPEISSSDMRNVATAYKMVLKGRFDEATLPVKNPELLRQMKMLSEVLEELSLHVVDESGRFVDAMTRVLDMFEIESSWLRKQIIPNLDTYLWLREITSGVAPCFALIDGLLQLRLEERGVLDHPLIRKVEEIGTHHIALHNDLMSLRKEWATGNYLNAVPILASNRKCGLNEAIGKVASMLKDLEKDFARTKHEIISSGLAMKQGVMDYVNGIEVWMAGNVEWGWTSARYHGIGWIPPPEKSGTFQL.

4 residues coordinate Mg(2+): Asp-97, Asp-101, Asn-242, and Ser-246. A DDXXD motif motif is present at residues Asp-97–Asp-101.

This sequence belongs to the terpene synthase family. Requires Mg(2+) as cofactor.

The enzyme catalyses (2E,6E)-farnesyl diphosphate = (+)-germacrene D + diphosphate. It participates in secondary metabolite biosynthesis; terpenoid biosynthesis. In terms of biological role, sesquiterpene synthase converting farnesyl diphosphate to eight sesquiterpenes, with (+)-germacrene D and an unidentified oxygenated sesquiterpene as the major products. Has no diterpene synthase activity. This chain is (+)-germacrene D synthase, found in Selaginella moellendorffii (Spikemoss).